The following is a 741-amino-acid chain: Endoplasmic reticulum membrane sensor NFE2L1 (741 aa).

A helical; Signal-anchor for type II membrane protein membrane pass occupies residues 7–24; the sequence is YLTEGLLQFTILLSLIGV. Disordered regions lie at residues 108-148 and 198-220; these read DPEG…TEQG and QKEQ…WSGE. Positions 113-131 are enriched in polar residues; sequence VSGSQPNSGLALESSSGLQ. The segment at 191-199 is cholesterol recognition/amino acid consensus (CRAC) region; that stretch reads VFDYSHRQK. The span at 198 to 216 shows a compositional bias: basic and acidic residues; sequence QKEQDVDKELQDGREREDT. Residues Asn-319 and Asn-331 are each glycosylated (N-linked (GlcNAc...) asparagine). The interval 350–354 is CPD; sequence SPEVE. The N-linked (GlcNAc...) asparagine glycan is linked to Asn-394. Disordered stretches follow at residues 441-501 and 551-582; these read EEEF…DSET and SALD…QMSR. The Destruction motif motif lies at 447–451; it reads DSGLS. Positions 447 to 492 are enriched in low complexity; that stretch reads DSGLSLDSSHSPSSLSSSEGSSSSSSSSSSSSASSSASSSFSEEGA. At Ser-497 the chain carries Phosphoserine; by CK2. The segment covering 567 to 582 has biased composition (basic and acidic residues); it reads GSKEKQADFLDKQMSR. Ser-568 bears the Phosphoserine mark. In terms of domain architecture, bZIP spans 623-686; that stretch reads LIRDIRRRGK…RQMKQKVQSL (64 aa). The tract at residues 625 to 644 is basic motif; it reads RDIRRRGKNKMAAQNCRKRK. The segment at 651-665 is leucine-zipper; the sequence is LERDVEDLQRDKARL. The disordered stretch occupies residues 722-741; it reads RTMADQQARRQERKPKDRRK. The short motif at 730-737 is the Nuclear localization signal element; it reads RRQERKPK. Basic residues predominate over residues 732-741; that stretch reads QERKPKDRRK.

Belongs to the bZIP family. CNC subfamily. As to quaternary structure, interacts with KEAP1. Interacts (via CPD region) with FBXW7; leading to its ubiquitination and degradation. Interacts with SYVN1/HRD1; leading to its ubiquitination and degradation. Interacts (when ubiquitinated) with DDI2; leading to its cleavage. In terms of assembly, interacts (via the bZIP domain) with small MAF protein (MAFF, MAFG or MAFK); required for binding to antioxidant response elements (AREs) on DNA. Interacts (via Destruction motif) with BTRC; leading to its ubiquitination and degradation. Interacts with CEBPB; the heterodimer represses expression of DSPP during odontoblast differentiation. Interacts with MOTS-c, a peptide produced by the mitochondrially encoded 12S rRNA MT-RNR1. Post-translationally, cleaved at Leu-104 by the aspartyl protease DDI2 following retrotranslocation, releasing the protein from the endoplasmic reticulum membrane and forming the transcription factor NRF1 that translocates into the nucleus. Ubiquitination is prerequisite for cleavage by aspartyl protease DDI2. N-glycosylated in normal conditions, when it has a single-pass type II membrane protein topology, with the DNA-binding domain facing the endoplasmic reticulum lumen. Deglycosylated during retrotranslocation to the cytosolic side of the membrane, to have a single-pass type III membrane protein topology with the major part of the protein facing the cytosol. In terms of processing, ubiquitinated by the SCF(FBXW7) complex and SYVN1/HRD1, leading to its degradation by the proteasome. Ubiquitinated during retrotranslocation to the cytosolic side of the membrane: ubiquitination does not lead to degradation and is required for processing by the aspartyl protease DDI2 and subsequent release from the endoplasmic reticulum membrane. Post-translationally, phosphorylation by CK2 at Ser-497 inhibits transcription factor activity, possibly by affecting DNA-binding activity. Phosphorylation at Ser-568 is required for interaction with CEBPB. Ubiquitinated by the SCF(BTRC) complex in the nucleus, leading to its degradation by the proteasome. In terms of tissue distribution, isoform 1: Widely expressed including kidney, brown fat, white fat, large intestine, small intestine, stomach, lung, brain and liver. Isoform 1: Expressed in mouse embryonic fibroblasts (MEF). Isoform 2: Widely expressed including kidney, brown fat, white fat, large intestine, small intestine, stomach, lung, brain and liver. Isoform 2: levels in white fat, lung and liver are increased compared to isoform 1 (at protein level). Isoform 2: levels are elevated in brown fat and brain, but are reduced in liver compared to isoform 1 levels. Isoform 2: Expressed in mouse embryonic fibroblasts (MEF).

The protein resides in the endoplasmic reticulum membrane. The protein localises to the nucleus. It is found in the cytoplasm. Its function is as follows. Endoplasmic reticulum membrane sensor that translocates into the nucleus in response to various stresses to act as a transcription factor. Constitutes a precursor of the transcription factor NRF1. Able to detect various cellular stresses, such as cholesterol excess, oxidative stress or proteasome inhibition. In response to stress, it is released from the endoplasmic reticulum membrane following cleavage by the protease DDI2 and translocates into the nucleus to form the transcription factor NRF1. Acts as a key sensor of cholesterol excess: in excess cholesterol conditions, the endoplasmic reticulum membrane form of the protein directly binds cholesterol via its CRAC motif, preventing cleavage and release of the transcription factor NRF1, thereby allowing expression of genes promoting cholesterol removal, such as CD36. Involved in proteasome homeostasis: in response to proteasome inhibition, it is released from the endoplasmic reticulum membrane, translocates to the nucleus and activates expression of genes encoding proteasome subunits. Functionally, CNC-type bZIP family transcription factor that translocates to the nucleus and regulates expression of target genes in response to various stresses. Heterodimerizes with small-Maf proteins (MAFF, MAFG or MAFK) and binds DNA motifs including the antioxidant response elements (AREs), which regulate expression of genes involved in oxidative stress response. Activates or represses expression of target genes, depending on the context. Plays a key role in cholesterol homeostasis by acting as a sensor of cholesterol excess: in low cholesterol conditions, translocates into the nucleus and represses expression of genes involved in defense against cholesterol excess, such as CD36. In excess cholesterol conditions, the endoplasmic reticulum membrane form of the protein directly binds cholesterol via its CRAC motif, preventing cleavage and release of the transcription factor NRF1, thereby allowing expression of genes promoting cholesterol removal. Critical for redox balance in response to oxidative stress: acts by binding the AREs motifs on promoters and mediating activation of oxidative stress response genes, such as GCLC, GCLM, GSS, MT1 and MT2. Plays an essential role during fetal liver hematopoiesis: probably has a protective function against oxidative stress and is involved in lipid homeostasis in the liver. Involved in proteasome homeostasis: in response to proteasome inhibition, mediates the 'bounce-back' of proteasome subunits by translocating into the nucleus and activating expression of genes encoding proteasome subunits. Also involved in regulating glucose flux. Together with CEBPB; represses expression of DSPP during odontoblast differentiation. In response to ascorbic acid induction, activates expression of SP7/Osterix in osteoblasts. In terms of biological role, transcription factor that binds the antioxidant response elements (ARE) consensus sequence on promoters and activates their expression. Transcription factor that binds the extended kappa 3 site of the TNF-alpha promoter after Fc gamma RIII stimulation and participates in the induction of this cytokine. The protein is Endoplasmic reticulum membrane sensor NFE2L1 of Mus musculus (Mouse).